Reading from the N-terminus, the 107-residue chain is Immunoglobulin kappa constant (107 aa).

The region spanning 6 to 103 (PTVSIFPPSS…STSPIVKSFN (98 aa)) is the Ig-like domain. Cysteines 27 and 87 form a disulfide.

The polypeptide is Immunoglobulin kappa constant (Mus musculus (Mouse)).